Reading from the N-terminus, the 136-residue chain is NADH-ubiquinone oxidoreductase chain 2 (136 aa).

The next 4 helical transmembrane spans lie at 12–32 (YFLIQSVASVIFLASILNQSF), 34–54 (FLIPFALLIKIGAAPFHMWLV), 74–94 (IGPLLGLAMLSSVSHLSWLMV), and 99–119 (FLLMLVYYVTYLAILYFAVIL).

Belongs to the complex I subunit 2 family.

Its subcellular location is the mitochondrion inner membrane. It carries out the reaction a ubiquinone + NADH + 5 H(+)(in) = a ubiquinol + NAD(+) + 4 H(+)(out). In terms of biological role, core subunit of the mitochondrial membrane respiratory chain NADH dehydrogenase (Complex I) that is believed to belong to the minimal assembly required for catalysis. Complex I functions in the transfer of electrons from NADH to the respiratory chain. The immediate electron acceptor for the enzyme is believed to be ubiquinone. This chain is NADH-ubiquinone oxidoreductase chain 2 (ND2), found in Artemia salina (Brine shrimp).